Here is a 108-residue protein sequence, read N- to C-terminus: Putative septation protein SpoVG (108 aa).

The disordered stretch occupies residues 84–108; it reads FEKQSSVETEPVTEENMETAENENE. Positions 94–108 are enriched in acidic residues; it reads PVTEENMETAENENE.

The protein belongs to the SpoVG family.

Could be involved in septation. The sequence is that of Putative septation protein SpoVG from Finegoldia magna (strain ATCC 29328 / DSM 20472 / WAL 2508) (Peptostreptococcus magnus).